Consider the following 306-residue polypeptide: Glutaminase (306 aa).

Ser-66, Asn-116, Glu-159, Asn-166, Tyr-190, Tyr-242, and Val-260 together coordinate substrate.

The protein belongs to the glutaminase family. In terms of assembly, homotetramer.

It carries out the reaction L-glutamine + H2O = L-glutamate + NH4(+). The sequence is that of Glutaminase from Caulobacter vibrioides (strain ATCC 19089 / CIP 103742 / CB 15) (Caulobacter crescentus).